A 356-amino-acid chain; its full sequence is GDP-mannose 4,6 dehydratase (356 aa).

Residues 12–17, 69–70, 91–95, and Tyr106 each bind NADP(+); these read GITGQD, DL, and LGAQS. Thr138 is a catalytic residue. Residues Glu140 and Tyr162 each act as nucleophile in the active site. Positions 166, 192, and 197 each coordinate NADP(+).

This sequence belongs to the NAD(P)-dependent epimerase/dehydratase family. GDP-mannose 4,6-dehydratase subfamily. It depends on NADP(+) as a cofactor.

The catalysed reaction is GDP-alpha-D-mannose = GDP-4-dehydro-alpha-D-rhamnose + H2O. Its pathway is nucleotide-sugar biosynthesis; GDP-L-fucose biosynthesis via de novo pathway; GDP-L-fucose from GDP-alpha-D-mannose: step 1/2. Its function is as follows. Participates in the synthesis of GDP-L-fucose, catalyzing the conversion of GDP-D-mannose to GDP-4-dehydro-6-deoxy-D-mannose (GDP-4-dehydro-alpha-D-rhamnose) which is further catalyzed by GDP-L-fucose synthase (ger). GDP-L-fucose is important for the synthesis of fucosylated N-glycans which are expressed on the cell surface. The chain is GDP-mannose 4,6 dehydratase (gmd) from Dictyostelium discoideum (Social amoeba).